The chain runs to 357 residues: Major outer membrane protein P.IB (357 aa).

The first 19 residues, 1–19, serve as a signal peptide directing secretion; sequence MKKSLIALTLAALPVAAMA.

The protein belongs to the Gram-negative porin family. As to quaternary structure, homotrimer.

The protein localises to the cell outer membrane. Functionally, serves as a slightly cation selective porin. This is Major outer membrane protein P.IB (por) from Neisseria sicca.